The sequence spans 656 residues: Leucine-rich repeat-containing protein 43 (656 aa).

Residues 1 to 13 (MEASYESESESES) are compositionally biased toward acidic residues. The tract at residues 1 to 25 (MEASYESESESESEAGPGTQRPGTG) is disordered. LRR repeat units lie at residues 150–170 (KLEE…TNLP), 172–193 (TLKV…CAHP), 196–215 (GLQH…ESLY), and 223–244 (NLVS…VTSL). One can recognise an LRRCT domain in the interval 258 to 296 (NPLALVPYYRGLTIDSLAQLCVLDDITVSPNEKHLFRGL). A disordered region spans residues 512–554 (LSAKKGKGEKDKKGKEKDRTGKGEKEPAKEWKVLKKKKEPPKE). Over residues 517 to 544 (GKGEKDKKGKEKDRTGKGEKEPAKEWKV) the composition is skewed to basic and acidic residues.

In Homo sapiens (Human), this protein is Leucine-rich repeat-containing protein 43 (LRRC43).